We begin with the raw amino-acid sequence, 125 residues long: Glycine cleavage system H protein (125 aa).

Residues 23–105 (VSTVGITEHA…FEGGWLFKVR (83 aa)) form the Lipoyl-binding domain. Lysine 64 carries the post-translational modification N6-lipoyllysine.

Belongs to the GcvH family. The glycine cleavage system is composed of four proteins: P, T, L and H. (R)-lipoate is required as a cofactor.

Its function is as follows. The glycine cleavage system catalyzes the degradation of glycine. The H protein shuttles the methylamine group of glycine from the P protein to the T protein. This is Glycine cleavage system H protein from Streptomyces avermitilis (strain ATCC 31267 / DSM 46492 / JCM 5070 / NBRC 14893 / NCIMB 12804 / NRRL 8165 / MA-4680).